A 126-amino-acid chain; its full sequence is Flagellar protein FliT (126 aa).

A required for homodimerization region spans residues 1–50; it reads MASPHRLLKDYQQLLSLSQKILHLAVNGQWDTLVEQEIVYVQSVEGLVNT. The segment at 60–98 is fliD binding; it reads MRLHLRQILQEVMDNEAKVKQLLQKRMDELSSLMGQSLK.

It belongs to the FliT family. In terms of assembly, homodimer. Interacts with FliD and FlhC.

Its subcellular location is the cytoplasm. It is found in the cytosol. Its function is as follows. Dual-function protein that regulates the transcription of class 2 flagellar operons and that also acts as an export chaperone for the filament-capping protein FliD. As a transcriptional regulator, acts as an anti-FlhDC factor; it directly binds FlhC, thus inhibiting the binding of the FlhC/FlhD complex to class 2 promoters, resulting in decreased expression of class 2 flagellar operons. As a chaperone, effects FliD transition to the membrane by preventing its premature polymerization, and by directing it to the export apparatus. This chain is Flagellar protein FliT, found in Pectobacterium carotovorum subsp. carotovorum (strain PC1).